The primary structure comprises 450 residues: L-lysine-epsilon aminotransferase (450 aa).

Positions 127 and 128 each coordinate pyridoxal 5'-phosphate. R168 and Q274 together coordinate 2-oxoglutarate. R168 provides a ligand contact to L-lysine. Position 274 (Q274) interacts with pyridoxal 5'-phosphate. Residue K300 is modified to N6-(pyridoxal phosphate)lysine. R423 contacts 2-oxoglutarate.

This sequence belongs to the class-III pyridoxal-phosphate-dependent aminotransferase family. Pyridoxal 5'-phosphate serves as cofactor.

It carries out the reaction L-lysine + 2-oxoglutarate = (S)-2-amino-6-oxohexanoate + L-glutamate. It functions in the pathway antibiotic biosynthesis; cephamycin C biosynthesis. Its function is as follows. Catalyzes the transfer of the terminal amino group of L-lysine to alpha-ketoglutarate to yield L-glutamate and 2-aminoadipate 6-semialdehyde ((S)-2-amino-6-oxohexanoate), which is spontaneously converted to the dehydrated form 1-piperideine 6-carboxylate. This chain is L-lysine-epsilon aminotransferase, found in Amycolatopsis lactamdurans (Nocardia lactamdurans).